A 430-amino-acid chain; its full sequence is MAANLSRNGPALQEAYVRVVTEKSPTDWALFTYEGNSNDIRVAGTGEGGLEEMVEELNSGKVMYAFCRVKDPNSGLPKFVLINWTGEGVNDVRKGACASHVSTMASFLKGAHVTINARAEEDVEPECIMEKVAKASGANYSFHKESGRFQDVGPQAPVGSVYQKTNAVSEIKRVGKDSFWAKAEKEEENRRLEEKRRAEEAQRQLEQERRERELREAARREQRYQEQGGEASPQRTWEQQQEVVSRNRNEQESAVHPREIFKQKERAMSTTSISSPQPGKLRSPFLQKQLTQPETHFGREPAAAISRPRADLPAEEPAPSTPPCLVQAEEEAVYEEPPEQETFYEQPPLVQQQGAGSEHIDHHIQGQGLSGQGLCARALYDYQAADDTEISFDPENLITGIEVIDEGWWRGYGPDGHFGMFPANYVELIE.

An ADF-H domain is found at asparagine 4–alanine 133. Position 26 is a phosphothreonine (threonine 26). 2 positions are modified to phosphoserine: glycine 137 and serine 160. Residue lysine 176 is modified to N6-acetyllysine. A coiled-coil region spans residues lysine 176–alanine 231. Residues alanine 183 and serine 232 each carry the phosphoserine modification. The tract at residues arginine 219 to serine 283 is disordered. Positions proline 233–valine 244 are enriched in polar residues. A compositionally biased stretch (basic and acidic residues) spans serine 245–alanine 267. The span at methionine 268 to glutamine 277 shows a compositional bias: polar residues. Serine 269, serine 272, serine 275, and serine 283 each carry phosphoserine. Lysine 288 is modified (N6-acetyllysine). Threonine 291 carries the post-translational modification Phosphothreonine. 2 positions are modified to phosphotyrosine: tyrosine 334 and tyrosine 344. Residues glycine 371–glutamate 430 form the SH3 domain.

It belongs to the ABP1 family. Interacts with SHANK2, SHANK3 and SYN1. Interacts with FGD1 and DNM1. Interacts with ANKRD54. Interacts with COBL. Interacts with WASL and WIPF1. Interacts with MAP4K1 and PRAM1. Degraded by caspases during apoptosis.

Its subcellular location is the cytoplasm. It is found in the cytoskeleton. It localises to the cell projection. The protein localises to the lamellipodium. The protein resides in the ruffle. Its subcellular location is the cell cortex. It is found in the cytosol. It localises to the synapse. The protein localises to the perikaryon. The protein resides in the neuron projection. Its subcellular location is the cell membrane. It is found in the cytoplasmic vesicle. It localises to the clathrin-coated vesicle membrane. The protein localises to the golgi apparatus membrane. The protein resides in the podosome. Its subcellular location is the early endosome. It is found in the dendrite. It localises to the postsynaptic density. In terms of biological role, adapter protein that binds F-actin and DNM1, and thereby plays a role in receptor-mediated endocytosis. Plays a role in the reorganization of the actin cytoskeleton, formation of cell projections, such as neurites, in neuron morphogenesis and synapse formation via its interaction with WASL and COBL. Does not bind G-actin and promote actin polymerization by itself. Required for the formation of organized podosome rosettes. May act as a common effector of antigen receptor-signaling pathways in leukocytes. Acts as a key component of the immunological synapse that regulates T-cell activation by bridging TCRs and the actin cytoskeleton to gene activation and endocytic processes. This Homo sapiens (Human) protein is Drebrin-like protein (DBNL).